The sequence spans 370 residues: Dihydrolipoyllysine-residue acetyltransferase component of acetoin cleaving system (370 aa).

A Lipoyl-binding domain is found at 4–79 (IHTLTMPKWG…PVGALLAVVV (76 aa)). Lysine 45 carries the N6-lipoyllysine modification. An AB hydrolase-1 domain is found at 135–355 (PLVLVHGFGG…EAGHMVQMEA (221 aa)).

Requires (R)-lipoate as cofactor.

The enzyme catalyses N(6)-[(R)-dihydrolipoyl]-L-lysyl-[protein] + acetyl-CoA = N(6)-[(R)-S(8)-acetyldihydrolipoyl]-L-lysyl-[protein] + CoA. It participates in ketone degradation; acetoin degradation. In Pseudomonas putida (Arthrobacter siderocapsulatus), this protein is Dihydrolipoyllysine-residue acetyltransferase component of acetoin cleaving system (acoC).